The chain runs to 226 residues: 2-C-methyl-D-erythritol 4-phosphate cytidylyltransferase (226 aa).

This sequence belongs to the IspD/TarI cytidylyltransferase family. IspD subfamily.

It catalyses the reaction 2-C-methyl-D-erythritol 4-phosphate + CTP + H(+) = 4-CDP-2-C-methyl-D-erythritol + diphosphate. It participates in isoprenoid biosynthesis; isopentenyl diphosphate biosynthesis via DXP pathway; isopentenyl diphosphate from 1-deoxy-D-xylulose 5-phosphate: step 2/6. Its function is as follows. Catalyzes the formation of 4-diphosphocytidyl-2-C-methyl-D-erythritol from CTP and 2-C-methyl-D-erythritol 4-phosphate (MEP). The polypeptide is 2-C-methyl-D-erythritol 4-phosphate cytidylyltransferase (Prochlorococcus marinus (strain SARG / CCMP1375 / SS120)).